A 242-amino-acid polypeptide reads, in one-letter code: Pyridoxine 5'-phosphate synthase (242 aa).

3-amino-2-oxopropyl phosphate is bound at residue asparagine 6. Position 8-9 (8-9) interacts with 1-deoxy-D-xylulose 5-phosphate; it reads DH. Arginine 17 serves as a coordination point for 3-amino-2-oxopropyl phosphate. Histidine 42 functions as the Proton acceptor in the catalytic mechanism. Arginine 44 and histidine 49 together coordinate 1-deoxy-D-xylulose 5-phosphate. Residue glutamate 69 is the Proton acceptor of the active site. Threonine 99 is a binding site for 1-deoxy-D-xylulose 5-phosphate. The active-site Proton donor is the histidine 190. Residues glycine 191 and 212-213 contribute to the 3-amino-2-oxopropyl phosphate site; that span reads GH.

Belongs to the PNP synthase family. As to quaternary structure, homooctamer; tetramer of dimers.

Its subcellular location is the cytoplasm. The enzyme catalyses 3-amino-2-oxopropyl phosphate + 1-deoxy-D-xylulose 5-phosphate = pyridoxine 5'-phosphate + phosphate + 2 H2O + H(+). Its pathway is cofactor biosynthesis; pyridoxine 5'-phosphate biosynthesis; pyridoxine 5'-phosphate from D-erythrose 4-phosphate: step 5/5. In terms of biological role, catalyzes the complicated ring closure reaction between the two acyclic compounds 1-deoxy-D-xylulose-5-phosphate (DXP) and 3-amino-2-oxopropyl phosphate (1-amino-acetone-3-phosphate or AAP) to form pyridoxine 5'-phosphate (PNP) and inorganic phosphate. In Neisseria meningitidis serogroup B (strain ATCC BAA-335 / MC58), this protein is Pyridoxine 5'-phosphate synthase.